A 102-amino-acid chain; its full sequence is UPF0328 protein ECU10_1820 (102 aa).

This sequence belongs to the UPF0328 family.

This Encephalitozoon cuniculi (strain GB-M1) (Microsporidian parasite) protein is UPF0328 protein ECU10_1820.